The primary structure comprises 125 residues: Insulin growth factor-like family member 3 (125 aa).

A signal peptide spans M1–G24.

Belongs to the IGFL family. In terms of tissue distribution, detected in the cerebellum.

It is found in the secreted. Functionally, potential ligand of the IGFLR1 cell membrane receptor. The chain is Insulin growth factor-like family member 3 (IGFL3) from Homo sapiens (Human).